Reading from the N-terminus, the 533-residue chain is MLYEKFEYNINNLIGNFGLSKMSIAVSGGSDSVALLYLANIWAEKNNIELFVISVDHNLREQSKQETHYIQNISNSLNRKHYSLSFDHQNNFSNLQERAREGRYDLMTNLCLELDILVLLTAHHEDDYVENFCLRLERNSGIFGLSSSNINWYNNIHIIRPLYNIPKSELVEYLVSHNIKWFEDESNSSDKYRRNVIRQKLAKGADYIRHFSKPVYREEFKGDTERSTAAYTSVGEEALLRGPVKLTVSSRGLTTVKTIKSTNNFSIFNWIPWSSHGMTEVKLIHATMPREDASTGTASKLSLEAKCGKMSKAAIISQQLKTNKRIENEFKPELISAIAEAVKIFEYGFAFLDLVKFDKFSNEVKVQIINFLLIIISGQSRAARFYSVEPILKLITQDVNFKNTLHGCIIKRIQNELLIYREFGKKLPESKILLDKSVIWDNRFCITKNQETPNCFVTHLSLKDYKIIKKQLDLEPLKNLSCKNHNAVLLTLPIIKILEKVIAIPHISYYDNDMWNFEVSFSPNFVSRFTHFC.

Residue 27-32 (SGGSDS) participates in ATP binding.

This sequence belongs to the tRNA(Ile)-lysidine synthase family.

Its subcellular location is the cytoplasm. It catalyses the reaction cytidine(34) in tRNA(Ile2) + L-lysine + ATP = lysidine(34) in tRNA(Ile2) + AMP + diphosphate + H(+). In terms of biological role, ligates lysine onto the cytidine present at position 34 of the AUA codon-specific tRNA(Ile) that contains the anticodon CAU, in an ATP-dependent manner. Cytidine is converted to lysidine, thus changing the amino acid specificity of the tRNA from methionine to isoleucine. This Rickettsia peacockii (strain Rustic) protein is tRNA(Ile)-lysidine synthase.